We begin with the raw amino-acid sequence, 463 residues long: Ataxin-10 homolog (463 aa).

The protein belongs to the ataxin-10 family.

Its subcellular location is the cytoplasm. Functionally, may play a role in the regulation of cytokinesis. This chain is Ataxin-10 homolog (CTR86), found in Candida albicans (strain SC5314 / ATCC MYA-2876) (Yeast).